We begin with the raw amino-acid sequence, 232 residues long: Large ribosomal subunit protein uL1 (232 aa).

It belongs to the universal ribosomal protein uL1 family. In terms of assembly, part of the 50S ribosomal subunit.

Its function is as follows. Binds directly to 23S rRNA. The L1 stalk is quite mobile in the ribosome, and is involved in E site tRNA release. Functionally, protein L1 is also a translational repressor protein, it controls the translation of the L11 operon by binding to its mRNA. This chain is Large ribosomal subunit protein uL1, found in Xylella fastidiosa (strain M23).